Consider the following 264-residue polypeptide: Thymidylate synthase (264 aa).

Arginine 21 contacts dUMP. Residue histidine 51 coordinates (6R)-5,10-methylene-5,6,7,8-tetrahydrofolate. Position 126–127 (126–127 (RR)) interacts with dUMP. The active-site Nucleophile is cysteine 146. DUMP is bound by residues 166–169 (RSAD), asparagine 177, and 207–209 (HLY). Aspartate 169 lines the (6R)-5,10-methylene-5,6,7,8-tetrahydrofolate pocket. (6R)-5,10-methylene-5,6,7,8-tetrahydrofolate is bound at residue alanine 263.

It belongs to the thymidylate synthase family. Bacterial-type ThyA subfamily. Homodimer.

It localises to the cytoplasm. It catalyses the reaction dUMP + (6R)-5,10-methylene-5,6,7,8-tetrahydrofolate = 7,8-dihydrofolate + dTMP. It functions in the pathway pyrimidine metabolism; dTTP biosynthesis. In terms of biological role, catalyzes the reductive methylation of 2'-deoxyuridine-5'-monophosphate (dUMP) to 2'-deoxythymidine-5'-monophosphate (dTMP) while utilizing 5,10-methylenetetrahydrofolate (mTHF) as the methyl donor and reductant in the reaction, yielding dihydrofolate (DHF) as a by-product. This enzymatic reaction provides an intracellular de novo source of dTMP, an essential precursor for DNA biosynthesis. The polypeptide is Thymidylate synthase (Mesorhizobium japonicum (strain LMG 29417 / CECT 9101 / MAFF 303099) (Mesorhizobium loti (strain MAFF 303099))).